The sequence spans 435 residues: GTPase Der (435 aa).

EngA-type G domains follow at residues Pro-4–Lys-167 and Ile-175–Asn-350. GTP-binding positions include Gly-10–Ser-17, Asp-57–Ile-61, Asn-119–Asp-122, Gly-181–Ser-188, Asp-228–Ile-232, and Asn-293–Asp-296. A KH-like domain is found at Gln-351–Lys-435.

This sequence belongs to the TRAFAC class TrmE-Era-EngA-EngB-Septin-like GTPase superfamily. EngA (Der) GTPase family. As to quaternary structure, associates with the 50S ribosomal subunit.

GTPase that plays an essential role in the late steps of ribosome biogenesis. In Lactobacillus acidophilus (strain ATCC 700396 / NCK56 / N2 / NCFM), this protein is GTPase Der.